The following is an 836-amino-acid chain: Zinc fingers and homeoboxes protein 2 (836 aa).

The disordered stretch occupies residues 1–61 (MASKRKSTTP…EHSSKETEVV (61 aa)). A compositionally biased stretch (polar residues) spans 8-19 (TTPCMVRTSQVL). The interaction with EFNB1 stretch occupies residues 27–77 (ADRAKDKGAGMPQSDVTKDSWAAEPEHSSKETEVVEVKSMGENLSKKLQGG). The span at 50-61 (EPEHSSKETEVV) shows a compositional bias: basic and acidic residues. K64 participates in a covalent cross-link: Glycyl lysine isopeptide (Lys-Gly) (interchain with G-Cter in SUMO2). 2 consecutive C2H2-type zinc fingers follow at residues 78–101 (YECK…DMQH) and 110–133 (YVCA…SKFH). Residues 164–214 (PITASGPGSSDNDPGVSVGKTPMTKTGKLKADAKKVPKKPDEAAPENHMEG) form a disordered region. Positions 192 to 214 (LKADAKKVPKKPDEAAPENHMEG) are enriched in basic and acidic residues. The interval 195–358 (DAKKVPKKPD…PAQLTPTKVS (164 aa)) is required for homodimerization. 4 consecutive DNA-binding regions (homeobox) follow at residues 263-324 (NTTK…WSPE), 439-501 (TPAS…IVHI), 530-591 (PQKF…EQAV), and 628-690 (SPSS…TLSW). The required for repressor activity stretch occupies residues 263-446 (NTTKYNSALD…PLTPASDRKK (184 aa)). The tract at residues 263-497 (NTTKYNSALD…SDHRYRCQRG (235 aa)) is required for interaction with NFYA. Residues 317–446 (HGISWSPEEV…PLTPASDRKK (130 aa)) are required for nuclear localization. The interval 404–442 (GQKRPLVTPQAAPEPKRPHIAQVPEPPPKVANTPLTPAS) is disordered. K455 is covalently cross-linked (Glycyl lysine isopeptide (Lys-Gly) (interchain with G-Cter in SUMO2)). 3 stretches are compositionally biased toward basic and acidic residues: residues 699 to 709 (MSDDRGRDAVS), 730 to 746 (YAKD…EKLV), and 813 to 824 (RVAEGTVERADS). A disordered region spans residues 699-836 (MSDDRGRDAV…DSTPAEAGQA (138 aa)). Phosphoserine occurs at positions 824 and 826.

This sequence belongs to the ZHX family. Homodimer (via homeobox domain 1). Heterodimer with ZHX1 (via homeobox domain 1). Heterodimer with ZHX3 (via homeobox domain 1). Heterodimerization with ZHX1 is not necessary for repressor activity. Interacts (via homeobox domain) with NFYA (via N-terminus). Interacts with EFNB1 intracellular domain peptide; the interaction enhances ZHX2 transcriptional repression activity. Expressed in retina where it localizes to Muller glial cells of the inner nuclear layer (at protein level). Detected in heart, brain, spleen, lung, liver, skeletal muscle, kidney and testis.

The protein resides in the nucleus. Functionally, acts as a transcriptional repressor. Represses the promoter activity of the CDC25C gene stimulated by NFYA. May play a role in retinal development where it regulates the composition of bipolar cell populations, by promoting differentiation of bipolar OFF-type cells. In the brain, may promote maintenance and suppress differentiation of neural progenitor cells in the developing cortex. The sequence is that of Zinc fingers and homeoboxes protein 2 (Zhx2) from Mus musculus (Mouse).